A 20-amino-acid chain; its full sequence is Antifungal protein 2 large subunit (20 aa).

Positions 1–20 are disordered; that stretch reads PEDPQRRYQEXQREXRXQQE.

As to quaternary structure, heterodimer of a large and a small subunit.

Its function is as follows. Possesses antifungal activity against P.infestans but not F.graminearum. This is Antifungal protein 2 large subunit from Malva parviflora (Little mallow).